We begin with the raw amino-acid sequence, 252 residues long: MMLHAQHMPGQPGAPSLVFLHGFSGDCREWQPVGEQFHGCSRLYIDLPGHGGSAAIPVGGFADVIRLLRATLISYNILKFWLVGYSLGGRVAMMAACQGIPGLCGLVVEGGHPGLQNEQARAERRLSDGRWAERFRREPLTEVFHDWYQQPVFASLTAQQRQALTALRSQNNGETLAAMLEATSLAAQPDLREALNALAFPFYYLCGERDSKFRALAQEVAATCHVIRNAGHNAHRENPAGVVDSLAQILRL.

It belongs to the AB hydrolase superfamily. MenH family. In terms of assembly, monomer.

The catalysed reaction is 5-enolpyruvoyl-6-hydroxy-2-succinyl-cyclohex-3-ene-1-carboxylate = (1R,6R)-6-hydroxy-2-succinyl-cyclohexa-2,4-diene-1-carboxylate + pyruvate. It functions in the pathway quinol/quinone metabolism; 1,4-dihydroxy-2-naphthoate biosynthesis; 1,4-dihydroxy-2-naphthoate from chorismate: step 3/7. It participates in quinol/quinone metabolism; menaquinone biosynthesis. In terms of biological role, catalyzes a proton abstraction reaction that results in 2,5-elimination of pyruvate from 2-succinyl-5-enolpyruvyl-6-hydroxy-3-cyclohexene-1-carboxylate (SEPHCHC) and the formation of 2-succinyl-6-hydroxy-2,4-cyclohexadiene-1-carboxylate (SHCHC). In Salmonella schwarzengrund (strain CVM19633), this protein is 2-succinyl-6-hydroxy-2,4-cyclohexadiene-1-carboxylate synthase.